Consider the following 860-residue polypeptide: MEVDADLELLTSLLEENEAAERNGVVSHEASSELDEFDELFDGDEDGSYHGSDNGTEEQTIGGVEEDFTTLFGDIDDIKEEEAAASDTKKQSSSVCQEKSKDELEDELRKMQAQMKKLQEQLQKTALAKTSSPGNPKKSPENKMVQSGKTSRTSPLIERKKTDSNTVAPQLTSPTVPKAKLPDAPKRKQNLSDKSPVQKKMASFLSPPEKSSARPGQSTATQPITNTLKSPVGQQYHVEKFSGLRIRKPRVSSSEMERKMNGRKLIRLAQLQNKIATEKLEEEDWVTFGVIVKKITPQSSNNGKTFSIWRLNDLKDLDKYISLFLFGDVHKEHWKTDQGTVIGLLNANPMKPKEGTDEVCLSVDNPQKVLLMGDAVDLGTCKARKKNGDPCTQMVNLNDCEYCQYHVQAQYKKVSSKRADLQSSYSGHVPKKMARGANGLRERLCQGGFHYGGVSSMAYAATLGSTTAPKKTVQSTLSNMVVRGAEAIALEARQKIAAAKNVVQTDEFKELMTLPTPGALNLKKHLSGVSPQANCGKEGQPIQSISASTLLKQQKQQMLNARKKRAEESQKRFLESTEKSEKSSTLTSSACSVFQSPKQGAEFPNAQKMATPKLGRGFAEGDDVLFFDISPPPAPKLSTSAEAKKLLAIQKLQAKGQTLAKTDPNSIKRKRGSSSEELVAQRVASHASTSPKSPDENEPAIKKHRDQLAYLESEEFQKILNAKSKHTGILKEAEVEIQEHYFDPLVKKEQLEEKMQSIREQSCRVVTCKTCKYTHFKPKETCVSENHDFHWHNGVKRFFKCPCGNRTISLDRLPKKHCSTCGLFKWERVGMLKEKTGPKLGGETLLPRGEEHGKFLNSLK.

Residues 1-145 (MEVDADLELL…PKKSPENKMV (145 aa)) form an N-terminal domain region. Residues 18–225 (EAAERNGVVS…GQSTATQPIT (208 aa)) form a disordered region. Composition is skewed to acidic residues over residues 32–46 (SELDEFDELFDGDED) and 64–84 (VEEDFTTLFGDIDDIKEEEAA). A coiled-coil region spans residues 93 to 131 (SSVCQEKSKDELEDELRKMQAQMKKLQEQLQKTALAKTS). A compositionally biased stretch (basic and acidic residues) spans 98–110 (EKSKDELEDELRK). Polar residues-rich tracts occupy residues 120-134 (EQLQKTALAKTSSPG), 144-154 (MVQSGKTSRTS), 164-175 (SNTVAPQLTSPT), and 214-225 (RPGQSTATQPIT). Positions 230-380 (SPVGQQYHVE…LMGDAVDLGT (151 aa)) are OB-fold domain. Positions 381–406 (CKARKKNGDPCTQMVNLNDCEYCQYH) are zinc finger-like 1. 2 disordered regions span residues 553 to 591 (QQKQQMLNARKKRAEESQKRFLESTEKSEKSSTLTSSAC) and 657 to 700 (QTLA…NEPA). Residues 565 to 582 (RAEESQKRFLESTEKSEK) are compositionally biased toward basic and acidic residues. The C-terminal domain stretch occupies residues 596 to 860 (SPKQGAEFPN…EHGKFLNSLK (265 aa)). 2 zinc finger-like regions span residues 768–787 (CKTCKYTHFKPKETCVSENH) and 801–821 (CPCGNRTISLDRLPKKHCSTC).

Belongs to the MCM10 family. In terms of assembly, self-associates.

It is found in the nucleus. Acts as a replication initiation factor that brings together the MCM2-7 helicase and the DNA polymerase alpha/primase complex in order to initiate DNA replication. Additionally, plays a role in preventing DNA damage during replication. The protein is Protein MCM10 homolog (mcm10) of Xenopus laevis (African clawed frog).